We begin with the raw amino-acid sequence, 196 residues long: ATP-dependent Clp protease proteolytic subunit (196 aa).

Serine 101 serves as the catalytic Nucleophile. Histidine 126 is an active-site residue.

The protein belongs to the peptidase S14 family. As to quaternary structure, component of the chloroplastic Clp protease core complex.

It is found in the plastid. The protein resides in the chloroplast stroma. The catalysed reaction is Hydrolysis of proteins to small peptides in the presence of ATP and magnesium. alpha-casein is the usual test substrate. In the absence of ATP, only oligopeptides shorter than five residues are hydrolyzed (such as succinyl-Leu-Tyr-|-NHMec, and Leu-Tyr-Leu-|-Tyr-Trp, in which cleavage of the -Tyr-|-Leu- and -Tyr-|-Trp bonds also occurs).. Its function is as follows. Cleaves peptides in various proteins in a process that requires ATP hydrolysis. Has a chymotrypsin-like activity. Plays a major role in the degradation of misfolded proteins. The chain is ATP-dependent Clp protease proteolytic subunit from Lobularia maritima (Sweet alyssum).